Here is a 258-residue protein sequence, read N- to C-terminus: Cytochrome c oxidase subunit 2 (258 aa).

Over 1–41 the chain is Mitochondrial intermembrane; that stretch reads MIVNECLFFTIALCDAAEPWQLGFQDAATPMMQGIIDLHHD. The chain crosses the membrane as a helical span at residues 42 to 58; that stretch reads ILFFLILILVFVLWILV. Topologically, residues 59 to 82 are mitochondrial matrix; that stretch reads RALWHFYYKKNPIPQRIVHGTTIE. A helical membrane pass occupies residues 83–104; the sequence is ILWTIFPSIILMFIAIPSFALL. At 105–258 the chain is on the mitochondrial intermembrane side; it reads YSMDEVVVDP…VSNLFIPPTS (154 aa). Residues His187, Cys222, Glu224, Cys226, His230, and Met233 each contribute to the Cu cation site. Glu224 is a Mg(2+) binding site.

The protein belongs to the cytochrome c oxidase subunit 2 family. Component of the cytochrome c oxidase (complex IV, CIV), a multisubunit enzyme composed of a catalytic core of 3 subunits and several supernumerary subunits. The complex exists as a monomer or a dimer and forms supercomplexes (SCs) in the inner mitochondrial membrane with ubiquinol-cytochrome c oxidoreductase (cytochrome b-c1 complex, complex III, CIII). The cofactor is Cu cation.

It localises to the mitochondrion inner membrane. It carries out the reaction 4 Fe(II)-[cytochrome c] + O2 + 8 H(+)(in) = 4 Fe(III)-[cytochrome c] + 2 H2O + 4 H(+)(out). Functionally, component of the cytochrome c oxidase, the last enzyme in the mitochondrial electron transport chain which drives oxidative phosphorylation. The respiratory chain contains 3 multisubunit complexes succinate dehydrogenase (complex II, CII), ubiquinol-cytochrome c oxidoreductase (cytochrome b-c1 complex, complex III, CIII) and cytochrome c oxidase (complex IV, CIV), that cooperate to transfer electrons derived from NADH and succinate to molecular oxygen, creating an electrochemical gradient over the inner membrane that drives transmembrane transport and the ATP synthase. Cytochrome c oxidase is the component of the respiratory chain that catalyzes the reduction of oxygen to water. Electrons originating from reduced cytochrome c in the intermembrane space (IMS) are transferred via the dinuclear copper A center (CU(A)) of subunit 2 and heme A of subunit 1 to the active site in subunit 1, a binuclear center (BNC) formed by heme A3 and copper B (CU(B)). The BNC reduces molecular oxygen to 2 water molecules using 4 electrons from cytochrome c in the IMS and 4 protons from the mitochondrial matrix. The protein is Cytochrome c oxidase subunit 2 (COX2) of Oenothera berteroana (Bertero's evening primrose).